The following is a 202-amino-acid chain: Small ribosomal subunit protein uS4c (202 aa).

In terms of domain architecture, S4 RNA-binding spans 90-165 (MRLDNILFRL…SQKYKIPNHL (76 aa)).

This sequence belongs to the universal ribosomal protein uS4 family. In terms of assembly, part of the 30S ribosomal subunit. Contacts protein S5. The interaction surface between S4 and S5 is involved in control of translational fidelity.

The protein localises to the plastid. Its subcellular location is the chloroplast. One of the primary rRNA binding proteins, it binds directly to 16S rRNA where it nucleates assembly of the body of the 30S subunit. Its function is as follows. With S5 and S12 plays an important role in translational accuracy. The chain is Small ribosomal subunit protein uS4c (rps4) from Diphyscium foliosum (Nut-moss).